Here is a 758-residue protein sequence, read N- to C-terminus: Microtubule-associated protein tau (758 aa).

Residues 1–26 (MAEPHQEFDVTEDHAGTYGLGDRKDQ) show a composition bias toward basic and acidic residues. The disordered stretch occupies residues 1–573 (MAEPHQEFDV…PVPMPDLKNV (573 aa)). A2 bears the N-acetylalanine mark. Y18 and Y29 each carry phosphotyrosine. Residue K44 forms a Glycyl lysine isopeptide (Lys-Gly) (interchain with G-Cter in ubiquitin) linkage. Phosphoserine is present on residues S46 and S61. A compositionally biased stretch (polar residues) spans 61-71 (SETSDAKSTPT). 3 positions are modified to phosphothreonine: T69, T71, and T111. 2 stretches are compositionally biased toward basic and acidic residues: residues 179–189 (EGGRHAPELLK) and 207–216 (GGKERPGSKE). Phosphoserine is present on S214. Acidic residues predominate over residues 217 to 228 (EVDEDRDVDESS). Basic and acidic residues predominate over residues 314-323 (EQAHSEEHLR). Residues 325–340 (AAFPGAPGEGPEAQGP) show a composition bias toward low complexity. 2 stretches are compositionally biased toward basic and acidic residues: residues 344–356 (EDAK…EPSE) and 381–393 (KSKD…DKKA). The segment covering 440 to 452 (KYVSSVTPRTGSS) has biased composition (polar residues). Basic and acidic residues predominate over residues 455 to 466 (KEMKLKGADGKT). Residue T470 is modified to Phosphothreonine. Residue R472 is modified to Omega-N-methylarginine. K480 is subject to N6,N6-dimethyllysine; alternate. K480 is modified (N6-acetyllysine; alternate). T486, T492, and T498 each carry phosphothreonine. A compositionally biased stretch (pro residues) spans 491–503 (KTPPAPKTPPSSG). Phosphoserine occurs at positions 502, 508, and 512. Positions 504–531 (EPPKSGDRSGYSSPGSPGTPGSRSRTPS) are enriched in low complexity. Y514 carries the phosphotyrosine modification. A phosphoserine mark is found at S515, S516, and S519. A phosphothreonine mark is found at T522 and T529. S531 carries the phosphoserine modification. Phosphothreonine is present on T534. K542 is modified (N6-acetyllysine). A Phosphothreonine modification is found at T548. Phosphoserine occurs at positions 552 and 554. 4 Tau/MAP repeats span residues 561–591 (QTAP…GGGK), 592–622 (VQII…GGGS), 623–653 (VQIV…GGGQ), and 654–685 (VEVK…GGGH). K571 participates in a covalent cross-link: Glycyl lysine isopeptide (Lys-Gly) (interchain with G-Cter in ubiquitin). N6-acetyllysine; alternate is present on K576. The residue at position 576 (K576) is an N6-methyllysine; alternate. A Glycyl lysine isopeptide (Lys-Gly) (interchain with G-Cter in ubiquitin); alternate cross-link involves residue K576. S579 carries the post-translational modification Phosphoserine. A Glycyl lysine isopeptide (Lys-Gly) (interchain with G-Cter in ubiquitin) cross-link involves residue K584. K598 is modified (N6-acetyllysine; alternate). K598 participates in a covalent cross-link: Glycyl lysine isopeptide (Lys-Gly) (interchain with G-Cter in ubiquitin); alternate. S602 and S606 each carry phosphoserine. N6-acetyllysine is present on K607. S610 carries the post-translational modification Phosphoserine. At K615 the chain carries N6-acetyllysine; alternate. A Glycyl lysine isopeptide (Lys-Gly) (interchain with G-Cter in ubiquitin); alternate cross-link involves residue K615. S622 carries the phosphoserine modification. The residue at position 628 (K628) is an N6,N6-dimethyllysine; alternate. An N6-acetyllysine; alternate mark is found at K628, K634, and K638. Residues K628, K634, and K638 each participate in a glycyl lysine isopeptide (Lys-Gly) (interchain with G-Cter in ubiquitin); alternate cross-link. Phosphoserine is present on S641. N6-acetyllysine; alternate occurs at positions 648, 660, and 664. Residues K648, K660, and K664 each participate in a glycyl lysine isopeptide (Lys-Gly) (interchain with G-Cter in ubiquitin); alternate cross-link. R666 bears the Omega-N-methylarginine mark. The residue at position 669 (S669) is a Phosphoserine. K670 participates in a covalent cross-link: Glycyl lysine isopeptide (Lys-Gly) (interchain with G-Cter in ubiquitin). Residue S673 is modified to Phosphoserine. K686 is subject to N6-acetyllysine; alternate. K686 participates in a covalent cross-link: Glycyl lysine isopeptide (Lys-Gly) (interchain with G-Cter in ubiquitin); alternate. Residue K692 forms a Glycyl lysine isopeptide (Lys-Gly) (interchain with G-Cter in ubiquitin) linkage. K702 bears the N6-acetyllysine; alternate mark. K702 is covalently cross-linked (Glycyl lysine isopeptide (Lys-Gly) (interchain with G-Cter in ubiquitin); alternate). Y711 is subject to Phosphotyrosine. 2 positions are modified to phosphoserine: S713 and S717. Residues 715–734 (VVSGDTSPRHLSNVSSTGSI) form a disordered region. Polar residues predominate over residues 718–733 (GDTSPRHLSNVSSTGS). T720 carries the phosphothreonine modification. Phosphoserine occurs at positions 721, 726, 733, and 739. T744 bears the Phosphothreonine mark.

As to quaternary structure, interacts with MARK1, MARK2, MARK3 and MARK4. Interacts with SQSTM1 when polyubiquitinated. Interacts with PSMC2 through SQSTM1. Interacts with FKBP4. Binds to CSNK1D. Interacts with SGK1. Interacts with EPM2A; the interaction dephosphorylates MAPT at Ser-396. Interacts with PIN1. Interacts with LRRK2. Interacts with LRP1, leading to endocytosis; this interaction is reduced in the presence of LRPAP1/RAP. Polyubiquitinated. Requires functional TRAF6 and may provoke SQSTM1-dependent degradation by the proteasome. In terms of processing, phosphorylation at various serine and threonine residues in S-P or T-P motifs by proline-directed protein kinases (PDPK1, CDK1, CDK5, GSK3, MAPK) (a few sites per protein in interphase, more in mitosis), and at serine residues in K-X-G-S motifs by MAP/microtubule affinity-regulating kinase (MARK1, MARK2, MARK3 or MARK4), causing detachment from microtubules, and their disassembly. Phosphorylation at Ser-579 by BRSK1 and BRSK2 in neurons affects ability to bind microtubules and plays a role in neuron polarization. Phosphorylated by PHK. Dephosphorylation at several serine and threonine residues by the serine/threonine phosphatase PPP5C. Phosphorylation at Ser-214 by SGK1 mediates microtubule depolymerization and neurite formation in hippocampal neurons.

It localises to the cytoplasm. The protein localises to the cytosol. Its subcellular location is the cell membrane. The protein resides in the cytoskeleton. It is found in the cell projection. It localises to the axon. The protein localises to the dendrite. Its function is as follows. Promotes microtubule assembly and stability, and might be involved in the establishment and maintenance of neuronal polarity. The C-terminus binds axonal microtubules while the N-terminus binds neural plasma membrane components, suggesting that tau functions as a linker protein between both. Axonal polarity is predetermined by tau localization (in the neuronal cell) in the domain of the cell body defined by the centrosome. The short isoforms allow plasticity of the cytoskeleton whereas the longer isoforms may preferentially play a role in its stabilization. This chain is Microtubule-associated protein tau (MAPT), found in Pongo pygmaeus (Bornean orangutan).